The primary structure comprises 136 residues: Nucleoside diphosphate kinase (136 aa).

Residues Lys10, Phe58, Arg86, Thr92, Arg104, and Asn114 each contribute to the ATP site. The active-site Pros-phosphohistidine intermediate is the His117.

The protein belongs to the NDK family. Homotetramer. Mg(2+) serves as cofactor.

The protein resides in the cytoplasm. It carries out the reaction a 2'-deoxyribonucleoside 5'-diphosphate + ATP = a 2'-deoxyribonucleoside 5'-triphosphate + ADP. The catalysed reaction is a ribonucleoside 5'-diphosphate + ATP = a ribonucleoside 5'-triphosphate + ADP. Functionally, major role in the synthesis of nucleoside triphosphates other than ATP. The ATP gamma phosphate is transferred to the NDP beta phosphate via a ping-pong mechanism, using a phosphorylated active-site intermediate. This Corynebacterium diphtheriae (strain ATCC 700971 / NCTC 13129 / Biotype gravis) protein is Nucleoside diphosphate kinase.